The primary structure comprises 390 residues: Serine/threonine/tyrosine-protein kinase HT1 (390 aa).

Residues leucine 86–leucine 359 form the Protein kinase domain. ATP-binding positions include phenylalanine 92–isoleucine 100 and lysine 113. Residue aspartate 212 is the Proton acceptor of the active site.

It belongs to the protein kinase superfamily. Ser/Thr protein kinase family. In terms of assembly, interacts with DTX56. Binds to MPK4 and MPK12. Associates to CBC1 and CBC2. In terms of processing, autophosphorylated. In terms of tissue distribution, mainly localizes in guard cells. Expressed at low level in leaves, stems, roots and flowers.

Its subcellular location is the cell membrane. The catalysed reaction is L-seryl-[protein] + ATP = O-phospho-L-seryl-[protein] + ADP + H(+). The enzyme catalyses L-threonyl-[protein] + ATP = O-phospho-L-threonyl-[protein] + ADP + H(+). It catalyses the reaction L-tyrosyl-[protein] + ATP = O-phospho-L-tyrosyl-[protein] + ADP + H(+). Inhibited by MPK4 and MPK12. Serine/threonine/tyrosine kinase involved in the control of stomatal movement in response to CO(2). Functions as a major negative regulator of CO(2)-induced stomatal closing. Does not seem to be involved in stomatal closure in response to abscisic acid (ABA) or light. Involved in the control of red light-induced stomatal opening. Is epistatic to SRK2E/OST1 function during stomatal responses to red light and altered CO(2). Phosphorylates SRK2E/OST1 and GHR1 to prevents SRK2E/OST1- and GHR1-induced activation of SLAC1, thus preventing stomatal closure. Mediates the phosphorylation of CBC1 and CBC2. The protein is Serine/threonine/tyrosine-protein kinase HT1 of Arabidopsis thaliana (Mouse-ear cress).